Here is a 409-residue protein sequence, read N- to C-terminus: Pyrophosphate--fructose 6-phosphate 1-phosphotransferase (409 aa).

Gly-14 contributes to the diphosphate binding site. Asp-123 contributes to the Mg(2+) binding site. Substrate contacts are provided by residues Thr-151–Asp-153, Met-196–Arg-198, Glu-268, and Tyr-325–Arg-328. Asp-153 (proton acceptor) is an active-site residue.

It belongs to the phosphofructokinase type A (PFKA) family. PPi-dependent PFK group II subfamily. Clade 'P' sub-subfamily. In terms of assembly, homodimer. The cofactor is Mg(2+).

It localises to the cytoplasm. The catalysed reaction is beta-D-fructose 6-phosphate + diphosphate = beta-D-fructose 1,6-bisphosphate + phosphate + H(+). The protein operates within carbohydrate degradation; glycolysis; D-glyceraldehyde 3-phosphate and glycerone phosphate from D-glucose: step 3/4. With respect to regulation, non-allosteric. In terms of biological role, catalyzes the phosphorylation of D-fructose 6-phosphate, the first committing step of glycolysis. Uses inorganic phosphate (PPi) as phosphoryl donor instead of ATP like common ATP-dependent phosphofructokinases (ATP-PFKs), which renders the reaction reversible, and can thus function both in glycolysis and gluconeogenesis. Consistently, PPi-PFK can replace the enzymes of both the forward (ATP-PFK) and reverse (fructose-bisphosphatase (FBPase)) reactions. This Methylomonas methanica protein is Pyrophosphate--fructose 6-phosphate 1-phosphotransferase.